A 341-amino-acid chain; its full sequence is HTH-type transcriptional repressor PurR (341 aa).

The HTH lacI-type domain occupies 2-56 (ATIKDVAKRAGVSTTTVSHVINKTRFVAENTRAAVWAAIKELNYSPSAVARSLKV). Residues 4–23 (IKDVAKRAGVSTTTVSHVIN) constitute a DNA-binding region (H-T-H motif). The DNA-binding element occupies 48–56 (SAVARSLKV). Y73, R190, T192, F221, and D275 together coordinate hypoxanthine.

Homodimer.

It functions in the pathway purine metabolism; purine nucleotide biosynthesis [regulation]. Functionally, is the main repressor of the genes involved in the de novo synthesis of purine nucleotides, regulating purB, purC, purEK, purF, purHD, purL, purMN and guaBA expression. PurR is allosterically activated to bind its cognate DNA by binding the purine corepressors, hypoxanthine or guanine, thereby effecting transcription repression. The chain is HTH-type transcriptional repressor PurR from Proteus mirabilis (strain HI4320).